An 803-amino-acid polypeptide reads, in one-letter code: Mechanosensitive cation channel TMEM63A (803 aa).

Residues 1-51 (MTDSPFLELWQSRTVAIRERLGIGDQPNDSYCYNSAKNSTVLQGVTFGGIP) lie on the Extracellular side of the membrane. A helical transmembrane segment spans residues 52–74 (TVLFIDVSCFLFLIVVFSIIRRK). The Cytoplasmic portion of the chain corresponds to 75–133 (FWDYGRIALVSEGNSESRFRRLSSSSSGQQDFESELGCCSWLTAIFRLHDDQILEWCGE). The chain crosses the membrane as a helical span at residues 134-166 (DAIHYLSFQRHIIFLLVVVSCLSLCIILPVNLS). The Extracellular segment spans residues 167-190 (GDLLDKDPYSFGRTTIANLQTDNN). Residues 191 to 216 (LLWLHTIFAILYLILTVVFMRHHTQS) form a helical membrane-spanning segment. Topologically, residues 217–415 (IKYKEESLVR…CWKNLSIQGF (199 aa)) are cytoplasmic. Residues 218–413 (KYKEESLVRR…DICWKNLSIQ (196 aa)) are intracellular linker IL2; confers mechanosensitivity. Residues 416 to 443 (RWWFQWLGINFILFVGLFFLTTPSIILS) form a helical membrane-spanning segment. At 444–461 (TMDKFNVTKPIHALNDPI) the chain is on the extracellular side. A helical transmembrane segment spans residues 462-489 (ISQFFPTLLLWSFSALLPTIVCYSTLLE). At 490–494 (SHWTK) the chain is on the cytoplasmic side. A helical membrane pass occupies residues 495-531 (SGENRIMMTKVYIFLIFMVLILPSLGLTSLDFFFRWL). At 532–553 (FDKTSSEASIRLECVFLPDQGA) the chain is on the extracellular side. A helical transmembrane segment spans residues 554–585 (FFVNYVIASAFIGNGMELLRLPGLILYTFRMV). Residues 554–585 (FFVNYVIASAFIGNGMELLRLPGLILYTFRMV) form a gating helix region. At 586-605 (MAKTAADRRNVKQHQAFEYE) the chain is on the cytoplasmic side. The helical transmembrane segment at 606–623 (FGAMYAWMLCVFTVIMAY) threads the bilayer. Residues 624 to 627 (SITC) lie on the Extracellular side of the membrane. Residues 628–650 (PIIVPFGLIYILLKHMVDRHNLY) traverse the membrane as a helical segment. Over 651–660 (FAYLPAKLEK) the chain is Cytoplasmic. The chain crosses the membrane as a helical span at residues 661-688 (RIHFAAVNQALAAPILCLFWLYFFSFLR). The Extracellular portion of the chain corresponds to 689-693 (LGLKA). Residues 694 to 708 (PLTLFTFLVLLLTIL) form a helical membrane-spanning segment. At 709–803 (VCLAYTCFGC…DSVAAADQED (95 aa)) the chain is on the cytoplasmic side.

The protein belongs to the CSC1 (TC 1.A.17) family. In terms of assembly, (Microbial infection) Interacts with H.contortus GAL-1 (via domain galectin 1).

It is found in the lysosome membrane. The protein resides in the early endosome membrane. The protein localises to the cell membrane. The enzyme catalyses Ca(2+)(in) = Ca(2+)(out). Mechanosensitive cation channel with low conductance and high activation threshold. In contrast to TMEM63B, does not show phospholipid scramblase activity. Acts as a regulator of lysosomal morphology by mediating lysosomal mechanosensitivity. Important for the baby's first breath and respiration throughout life. Upon lung inflation conducts cation currents in alveolar type 1 and 2 cells triggering lamellar body exocytosis and surfactant secretion into airspace. Also acts as an osmosensitive cation channel preferentially activated by hypotonic stress. Functionally, (Microbial infection) Involved in the immunomodulatory effects exerted by H.contortus GAL-1 on host peripheral blood mononuclear cells to down-regulate host immune response. The chain is Mechanosensitive cation channel TMEM63A (TMEM63A) from Capra hircus (Goat).